Here is a 712-residue protein sequence, read N- to C-terminus: Glycine--tRNA ligase beta subunit (712 aa).

It belongs to the class-II aminoacyl-tRNA synthetase family. In terms of assembly, tetramer of two alpha and two beta subunits.

It is found in the cytoplasm. It carries out the reaction tRNA(Gly) + glycine + ATP = glycyl-tRNA(Gly) + AMP + diphosphate. The sequence is that of Glycine--tRNA ligase beta subunit from Acaryochloris marina (strain MBIC 11017).